Consider the following 330-residue polypeptide: DNA-directed RNA polymerase subunit alpha (330 aa).

An alpha N-terminal domain (alpha-NTD) region spans residues 1-225 (MSDLAIPTIS…KQFAALVSHN (225 aa)). Positions 237-330 (VKYAIPEEKY…KKKNKGMDEA (94 aa)) are alpha C-terminal domain (alpha-CTD).

This sequence belongs to the RNA polymerase alpha chain family. Homodimer. The RNAP catalytic core consists of 2 alpha, 1 beta, 1 beta' and 1 omega subunit. When a sigma factor is associated with the core the holoenzyme is formed, which can initiate transcription.

It catalyses the reaction RNA(n) + a ribonucleoside 5'-triphosphate = RNA(n+1) + diphosphate. DNA-dependent RNA polymerase catalyzes the transcription of DNA into RNA using the four ribonucleoside triphosphates as substrates. The protein is DNA-directed RNA polymerase subunit alpha of Dehalococcoides mccartyi (strain ATCC BAA-2266 / KCTC 15142 / 195) (Dehalococcoides ethenogenes (strain 195)).